A 100-amino-acid polypeptide reads, in one-letter code: UPF0235 protein TC_0667 (100 aa).

It belongs to the UPF0235 family.

The chain is UPF0235 protein TC_0667 from Chlamydia muridarum (strain MoPn / Nigg).